We begin with the raw amino-acid sequence, 380 residues long: Guanine nucleotide-binding protein subunit beta (380 aa).

WD repeat units follow at residues 64-94 (GHSG…IVWN), 106-136 (LHCP…SIFN), 155-186 (GHKG…VLWD), 203-234 (GHTA…RLWD), 247-277 (GHED…RLFD), 296-326 (NELP…YVWD), and 342-372 (SHDG…KIWA).

It belongs to the WD repeat G protein beta family. As to quaternary structure, g proteins are composed of 3 units, alpha, beta and gamma. In terms of tissue distribution, present in the root, leaf and tassel.

Guanine nucleotide-binding proteins (G proteins) are involved as a modulator or transducer in various transmembrane signaling systems. The beta and gamma chains are required for the GTPase activity, for replacement of GDP by GTP, and for G protein-effector interaction. This Zea mays (Maize) protein is Guanine nucleotide-binding protein subunit beta (GB1).